The sequence spans 368 residues: tRNA-specific 2-thiouridylase MnmA (368 aa).

ATP is bound by residues 23–30 (ALSGGVDS) and L49. C110 acts as the Nucleophile in catalysis. C110 and C209 are oxidised to a cystine. G135 serves as a coordination point for ATP. The segment at 159 to 161 (KDQ) is interaction with tRNA. The active-site Cysteine persulfide intermediate is the C209. The interaction with tRNA stretch occupies residues 314 to 315 (RY).

Belongs to the MnmA/TRMU family.

Its subcellular location is the cytoplasm. The enzyme catalyses S-sulfanyl-L-cysteinyl-[protein] + uridine(34) in tRNA + AH2 + ATP = 2-thiouridine(34) in tRNA + L-cysteinyl-[protein] + A + AMP + diphosphate + H(+). Functionally, catalyzes the 2-thiolation of uridine at the wobble position (U34) of tRNA, leading to the formation of s(2)U34. This chain is tRNA-specific 2-thiouridylase MnmA, found in Synechococcus sp. (strain JA-2-3B'a(2-13)) (Cyanobacteria bacterium Yellowstone B-Prime).